A 740-amino-acid chain; its full sequence is Ethylene receptor 1 (740 aa).

A run of 3 helical transmembrane segments spans residues 23–43, 54–74, and 92–112; these read ISDF…IYFV, VLVQ…INLW, and VLTA…IPDL. Residues C65 and H69 each contribute to the Cu cation site. The GAF domain maps to 158 to 307; the sequence is DRHTILKTTL…VVADQVAVAL (150 aa). Residues 350-588 enclose the Histidine kinase domain; sequence VMNHEMRTPM…TFIVKLGIAD (239 aa). H353 bears the Phosphohistidine; by autocatalysis mark. The 118-residue stretch at 614–731 folds into the Response regulatory domain; sequence KVLVMDDNGV…KMRSVLSELI (118 aa). Residue D662 is modified to 4-aspartylphosphate.

This sequence belongs to the ethylene receptor family. In terms of assembly, homodimer; disulfide-linked. Requires Cu cation as cofactor. Activation probably requires a transfer of a phosphate group between a His in the transmitter domain and an Asp of the receiver domain. As to expression, in seeds and placenta.

The protein localises to the endoplasmic reticulum membrane. It carries out the reaction ATP + protein L-histidine = ADP + protein N-phospho-L-histidine.. Functionally, may act early in the ethylene signal transduction pathway, possibly as an ethylene receptor, or as a regulator of the pathway. The protein is Ethylene receptor 1 (ETR1) of Cucumis melo var. cantalupensis (Netted muskmelon).